A 325-amino-acid polypeptide reads, in one-letter code: Ribose-phosphate pyrophosphokinase 2 (325 aa).

96–101 provides a ligand contact to ATP; the sequence is RQDKKD. Residues D135, H137, D146, and D150 each contribute to the Mg(2+) site. Position 137 (H137) interacts with ATP. The binding of phosphoribosylpyrophosphate stretch occupies residues 219 to 234; sequence KDRVAILVDDMADTCG.

The protein belongs to the ribose-phosphate pyrophosphokinase family. Homodimer. The active form is probably a hexamer composed of 3 homodimers. It depends on Mg(2+) as a cofactor.

The enzyme catalyses D-ribose 5-phosphate + ATP = 5-phospho-alpha-D-ribose 1-diphosphate + AMP + H(+). It functions in the pathway metabolic intermediate biosynthesis; 5-phospho-alpha-D-ribose 1-diphosphate biosynthesis; 5-phospho-alpha-D-ribose 1-diphosphate from D-ribose 5-phosphate (route I): step 1/1. Its activity is regulated as follows. Activated by magnesium and inorganic phosphate. Competitively or non-competitively inhibited by ADP, 2,3-bisphosphoglyceride or GDP. Catalyzes the synthesis of phosphoribosylpyrophosphate (PRPP) that is essential for nucleotide synthesis. The protein is Ribose-phosphate pyrophosphokinase 2 (PRPS2) of Gallus gallus (Chicken).